The chain runs to 505 residues: Exodeoxyribonuclease 7 large subunit (505 aa).

The disordered stretch occupies residues 466-505 (SGDRDAVIDGEGGPAPAPTAPAPKPRPKPAAPPAGQGDLF). Positions 480 to 497 (APAPTAPAPKPRPKPAAP) are enriched in pro residues.

This sequence belongs to the XseA family. Heterooligomer composed of large and small subunits.

The protein resides in the cytoplasm. The catalysed reaction is Exonucleolytic cleavage in either 5'- to 3'- or 3'- to 5'-direction to yield nucleoside 5'-phosphates.. Bidirectionally degrades single-stranded DNA into large acid-insoluble oligonucleotides, which are then degraded further into small acid-soluble oligonucleotides. In Caulobacter vibrioides (strain NA1000 / CB15N) (Caulobacter crescentus), this protein is Exodeoxyribonuclease 7 large subunit.